Consider the following 654-residue polypeptide: Protein fem-1 homolog A (654 aa).

ANK repeat units follow at residues Asp-2 to Ile-31, Gly-40 to Ala-70, Glu-82 to Arg-111, Thr-115 to Val-145, His-149 to Arg-178, Lys-182 to Arg-211, and Tyr-214 to Gln-243. Phosphoserine is present on Ser-108. Positions His-241 to Pro-265 are disordered. The span at Gly-253–Ser-263 shows a compositional bias: polar residues. TPR repeat units lie at residues Val-283–Gly-317 and Ser-375–Asn-408. 2 ANK repeats span residues Asn-519 to Ser-561 and Asp-565 to Ala-594. At Ser-608 the chain carries Phosphoserine.

It belongs to the fem-1 family. As to quaternary structure, component of a CRL2 E3 ubiquitin-protein ligase complex, also named ECS (Elongin BC-CUL2/5-SOCS-box protein) complex, composed of CUL2, Elongin BC (ELOB and ELOC), RBX1 and substrate-specific adapter FEM1A. Interacts with PTGER4. Interacts with NFKB1; the interaction is direct. Post-translationally, phosphorylated; highly phosphorylated in myoblasts and myotubes. Phosphorylation at Ser-108 and Ser-608 promote PGE2-EP4-mediated inhibition of inflammation. Dephosphorylated by protein phosphatase 2A (PP2A).

It localises to the mitochondrion. It is found in the cytoplasm. The protein operates within protein modification; protein ubiquitination. In terms of biological role, substrate-recognition component of a Cul2-RING (CRL2) E3 ubiquitin-protein ligase complex of the DesCEND (destruction via C-end degrons) pathway, which recognizes a C-degron located at the extreme C terminus of target proteins, leading to their ubiquitination and degradation. The C-degron recognized by the DesCEND pathway is usually a motif of less than ten residues and can be present in full-length proteins, truncated proteins or proteolytically cleaved forms. The CRL2(FEM1A) complex specifically recognizes proteins with an arginine at the C-terminus: recognizes and binds proteins ending with -Lys/Arg-Xaa-Arg and -Lys/Arg-Xaa-Xaa-Arg C-degrons, such as SIL1 or OR51B2, leading to their ubiquitination and degradation. Involved in PGE2-EP4-mediated inhibition of inflammation of macrophages via interaction with NFKB1 and PTGER4. Promotes inflammation in brain microglia through MAP2K4/MKK4-mediated signaling. The chain is Protein fem-1 homolog A from Rattus norvegicus (Rat).